Here is a 168-residue protein sequence, read N- to C-terminus: NADH-quinone oxidoreductase subunit E 2 (168 aa).

Cys-77, Cys-82, Cys-118, and Cys-122 together coordinate [2Fe-2S] cluster.

Belongs to the complex I 24 kDa subunit family. [2Fe-2S] cluster is required as a cofactor.

It catalyses the reaction a quinone + NADH + 5 H(+)(in) = a quinol + NAD(+) + 4 H(+)(out). In terms of biological role, NDH-1 shuttles electrons from NADH, via FMN and iron-sulfur (Fe-S) centers, to quinones in the respiratory chain. The immediate electron acceptor for the enzyme in this species is believed to be ubiquinone. Couples the redox reaction to proton translocation (for every two electrons transferred, four hydrogen ions are translocated across the cytoplasmic membrane), and thus conserves the redox energy in a proton gradient. In Rhizobium meliloti (strain 1021) (Ensifer meliloti), this protein is NADH-quinone oxidoreductase subunit E 2 (nuoE2).